The following is a 340-amino-acid chain: GTP 3',8-cyclase (340 aa).

A Radical SAM core domain is found at 20–246 (RFQRQYTYLR…PKAVNDGPAK (227 aa)). Arg29 provides a ligand contact to GTP. Residues Cys36 and Cys40 each coordinate [4Fe-4S] cluster. Residue Tyr42 coordinates S-adenosyl-L-methionine. Cys43 is a binding site for [4Fe-4S] cluster. Arg79 is a binding site for GTP. Gly83 serves as a coordination point for S-adenosyl-L-methionine. Thr110 is a binding site for GTP. Ser134 contributes to the S-adenosyl-L-methionine binding site. Lys171 contributes to the GTP binding site. Met205 is a binding site for S-adenosyl-L-methionine. [4Fe-4S] cluster contacts are provided by Cys268 and Cys271. A GTP-binding site is contributed by 273–275 (RLR). Cys285 contacts [4Fe-4S] cluster.

This sequence belongs to the radical SAM superfamily. MoaA family. In terms of assembly, monomer and homodimer. [4Fe-4S] cluster is required as a cofactor.

The enzyme catalyses GTP + AH2 + S-adenosyl-L-methionine = (8S)-3',8-cyclo-7,8-dihydroguanosine 5'-triphosphate + 5'-deoxyadenosine + L-methionine + A + H(+). The protein operates within cofactor biosynthesis; molybdopterin biosynthesis. In terms of biological role, catalyzes the cyclization of GTP to (8S)-3',8-cyclo-7,8-dihydroguanosine 5'-triphosphate. This is GTP 3',8-cyclase from Haemophilus ducreyi (strain 35000HP / ATCC 700724).